The following is an 89-amino-acid chain: Phosphocarrier protein HPr (89 aa).

An HPr domain is found at 1-88 (MLQRDTTIIN…ALIANRFGEG (88 aa)). Catalysis depends on histidine 15, which acts as the Pros-phosphohistidine intermediate.

Belongs to the HPr family.

Its subcellular location is the cytoplasm. General (non sugar-specific) component of the phosphoenolpyruvate-dependent sugar phosphotransferase system (sugar PTS). This major carbohydrate active-transport system catalyzes the phosphorylation of incoming sugar substrates concomitantly with their translocation across the cell membrane. The phosphoryl group from phosphoenolpyruvate (PEP) is transferred to the phosphoryl carrier protein HPr by enzyme I. Phospho-HPr then transfers it to the PTS EIIA domain. In Cupriavidus necator (strain ATCC 17699 / DSM 428 / KCTC 22496 / NCIMB 10442 / H16 / Stanier 337) (Ralstonia eutropha), this protein is Phosphocarrier protein HPr (phbH).